The primary structure comprises 275 residues: Myoblast determination protein 1 homolog 2 (275 aa).

The bHLH domain occupies 84-135; sequence DRRKAATMRERRRLGKVNDAFENLKRCTSNNPNQRLPKVEILRNAISYIESL. Positions 232–265 are enriched in polar residues; it reads SGQEGSEGSPCSPQEGSILSRNGGTVPSPTNCPQ. The tract at residues 232–275 is disordered; sequence SGQEGSEGSPCSPQEGSILSRNGGTVPSPTNCPQPSHDPIYQVL.

Efficient DNA binding requires dimerization with another bHLH protein.

It localises to the nucleus. May act as a transcriptional activator that promotes transcription of muscle-specific target genes and plays a role in muscle differentiation. The chain is Myoblast determination protein 1 homolog 2 (myod2) from Oncorhynchus mykiss (Rainbow trout).